Reading from the N-terminus, the 499-residue chain is MSSPKKNFKKPQPKTENQKQALNEERIAELKKSRILGKNRPFKKMIYVDTKAQRKQKHENVAFLKTLQENKESDVPKKRRGRKPKHAPLKEKNNLKLFDILEGSLKSHTENDDTNKVISLLVEVWEKKNKKKDNNSLSNKDIVNVLSKFELPDDEIIFVLDELRDKGIELPHDVEEHIHEFRANQDLSIIDEDIEELTTKNISNRDKVDDNVRFFLGSLDSSKMLDFESEQRIAKVLNSTDEESRKYAINQLVTSNLRLVVSIAKKHLERGLDFNDLIQEGNLGLLKAISKFNWSLGNKFSTYATWWIKQAITRAIADQARTVRIPVHMVETINRLAKAERALNQELGREPTAEELAEKMGGQAEGFTVKKIAEIKRLSLDPVSLDKTVGHDEESQFGDFVRDTDAQMPDEFTESRSNYEKIDELLNNCLSEQEELIVRMRIGMPPYNETKTLDEVSQKIKIPREKIRQIETKAIRKLRQAVRNNHMSLSFMRGNEKKD.

Composition is skewed to basic residues over residues 1–12 and 77–87; these read MSSPKKNFKKPQ and KKRRGRKPKHA. Disordered stretches follow at residues 1–25 and 68–89; these read MSSP…LNEE and QENK…HAPL. Residues 252 to 322 are sigma-70 factor domain-2; it reads LVTSNLRLVV…TRAIADQART (71 aa). The Interaction with polymerase core subunit RpoC motif lies at 276 to 279; it reads DLIQ. The interval 331–412 is sigma-70 factor domain-3; it reads ETINRLAKAE…DTDAQMPDEF (82 aa). The tract at residues 425 to 480 is sigma-70 factor domain-4; it reads LLNNCLSEQEELIVRMRIGMPPYNETKTLDEVSQKIKIPREKIRQIETKAIRKLRQ. Positions 453–472 form a DNA-binding region, H-T-H motif; it reads LDEVSQKIKIPREKIRQIET.

Belongs to the sigma-70 factor family. RpoD/SigA subfamily. As to quaternary structure, interacts transiently with the RNA polymerase catalytic core.

The protein resides in the cytoplasm. Functionally, sigma factors are initiation factors that promote the attachment of RNA polymerase to specific initiation sites and are then released. This sigma factor is the primary sigma factor during exponential growth. This Mycoplasma pneumoniae (strain ATCC 29342 / M129 / Subtype 1) (Mycoplasmoides pneumoniae) protein is RNA polymerase sigma factor SigA.